The sequence spans 251 residues: Triosephosphate isomerase (251 aa).

9–11 (NWK) is a substrate binding site. The active-site Electrophile is the His93. The active-site Proton acceptor is Glu163. Residues Gly169, Ser209, and 230 to 231 (GG) contribute to the substrate site.

This sequence belongs to the triosephosphate isomerase family. Homodimer.

It is found in the cytoplasm. It carries out the reaction D-glyceraldehyde 3-phosphate = dihydroxyacetone phosphate. It participates in carbohydrate biosynthesis; gluconeogenesis. It functions in the pathway carbohydrate degradation; glycolysis; D-glyceraldehyde 3-phosphate from glycerone phosphate: step 1/1. Involved in the gluconeogenesis. Catalyzes stereospecifically the conversion of dihydroxyacetone phosphate (DHAP) to D-glyceraldehyde-3-phosphate (G3P). The protein is Triosephosphate isomerase of Ruegeria pomeroyi (strain ATCC 700808 / DSM 15171 / DSS-3) (Silicibacter pomeroyi).